A 211-amino-acid chain; its full sequence is Thiamine-phosphate synthase (211 aa).

Residues 37-41 and Asn69 each bind 4-amino-2-methyl-5-(diphosphooxymethyl)pyrimidine; that span reads QLRIK. Asp70 and Asp89 together coordinate Mg(2+). Ser108 is a binding site for 4-amino-2-methyl-5-(diphosphooxymethyl)pyrimidine. Residue 134–136 coordinates 2-[(2R,5Z)-2-carboxy-4-methylthiazol-5(2H)-ylidene]ethyl phosphate; that stretch reads TQT. A 4-amino-2-methyl-5-(diphosphooxymethyl)pyrimidine-binding site is contributed by Lys137. 2-[(2R,5Z)-2-carboxy-4-methylthiazol-5(2H)-ylidene]ethyl phosphate contacts are provided by residues Gly166 and 186-187; that span reads VS.

Belongs to the thiamine-phosphate synthase family. It depends on Mg(2+) as a cofactor.

The enzyme catalyses 2-[(2R,5Z)-2-carboxy-4-methylthiazol-5(2H)-ylidene]ethyl phosphate + 4-amino-2-methyl-5-(diphosphooxymethyl)pyrimidine + 2 H(+) = thiamine phosphate + CO2 + diphosphate. It catalyses the reaction 2-(2-carboxy-4-methylthiazol-5-yl)ethyl phosphate + 4-amino-2-methyl-5-(diphosphooxymethyl)pyrimidine + 2 H(+) = thiamine phosphate + CO2 + diphosphate. It carries out the reaction 4-methyl-5-(2-phosphooxyethyl)-thiazole + 4-amino-2-methyl-5-(diphosphooxymethyl)pyrimidine + H(+) = thiamine phosphate + diphosphate. The protein operates within cofactor biosynthesis; thiamine diphosphate biosynthesis; thiamine phosphate from 4-amino-2-methyl-5-diphosphomethylpyrimidine and 4-methyl-5-(2-phosphoethyl)-thiazole: step 1/1. Functionally, condenses 4-methyl-5-(beta-hydroxyethyl)thiazole monophosphate (THZ-P) and 2-methyl-4-amino-5-hydroxymethyl pyrimidine pyrophosphate (HMP-PP) to form thiamine monophosphate (TMP). The protein is Thiamine-phosphate synthase of Salmonella typhimurium (strain LT2 / SGSC1412 / ATCC 700720).